The sequence spans 361 residues: Thermostable alkaline protease (361 aa).

An N-terminal signal peptide occupies residues 1–24 (MRQSLKVMVLSTVALLFMANPAAA). Positions 25–93 (SEEKKEYLIV…IEKNAEVTIS (69 aa)) are excised as a propeptide. Ca(2+) is bound at residue Q94. The region spanning 97–360 (PWGISFINTQ…NGLVHAGRAT (264 aa)) is the Peptidase S8 domain. Catalysis depends on D124, which acts as the Charge relay system. D132 is a binding site for Ca(2+). The Charge relay system role is filled by H154. L165, N167, I169, V171, A255, Y257, and V260 together coordinate Ca(2+). S307 (charge relay system) is an active-site residue.

It belongs to the peptidase S8 family. Requires Ca(2+) as cofactor.

It localises to the secreted. In terms of biological role, shows keratinolytic activity. The chain is Thermostable alkaline protease from Halalkalibacterium halodurans (strain ATCC BAA-125 / DSM 18197 / FERM 7344 / JCM 9153 / C-125) (Bacillus halodurans).